Reading from the N-terminus, the 546-residue chain is Probable protein kinase UbiB (546 aa).

The region spanning D124–L502 is the Protein kinase domain. ATP is bound by residues L130 to V138 and K153. D288 functions as the Proton acceptor in the catalytic mechanism. 2 consecutive transmembrane segments (helical) span residues Y501–P521 and E522–W542.

The protein belongs to the ABC1 family. UbiB subfamily.

The protein localises to the cell inner membrane. It functions in the pathway cofactor biosynthesis; ubiquinone biosynthesis [regulation]. Functionally, is probably a protein kinase regulator of UbiI activity which is involved in aerobic coenzyme Q (ubiquinone) biosynthesis. In Klebsiella pneumoniae (strain 342), this protein is Probable protein kinase UbiB.